Reading from the N-terminus, the 238-residue chain is tRNA (guanine-N(7)-)-methyltransferase (238 aa).

S-adenosyl-L-methionine is bound by residues Glu68, Glu93, Asp120, and Asp143. Asp143 is an active-site residue. Substrate-binding positions include Lys147, Asp179, and 216-219 (TKFE).

The protein belongs to the class I-like SAM-binding methyltransferase superfamily. TrmB family.

The enzyme catalyses guanosine(46) in tRNA + S-adenosyl-L-methionine = N(7)-methylguanosine(46) in tRNA + S-adenosyl-L-homocysteine. It functions in the pathway tRNA modification; N(7)-methylguanine-tRNA biosynthesis. Functionally, catalyzes the formation of N(7)-methylguanine at position 46 (m7G46) in tRNA. This Shewanella frigidimarina (strain NCIMB 400) protein is tRNA (guanine-N(7)-)-methyltransferase.